Consider the following 39-residue polypeptide: Photosystem II reaction center protein L (39 aa).

Residues 18-38 form a helical membrane-spanning segment; it reads SLYLGLLLVFVLGILFSSYFF.

This sequence belongs to the PsbL family. In terms of assembly, PSII is composed of 1 copy each of membrane proteins PsbA, PsbB, PsbC, PsbD, PsbE, PsbF, PsbH, PsbI, PsbJ, PsbK, PsbL, PsbM, PsbT, PsbX, PsbY, Psb30/Ycf12, peripheral proteins PsbO, CyanoQ (PsbQ), PsbU, PsbV and a large number of cofactors. It forms dimeric complexes.

Its subcellular location is the cellular thylakoid membrane. One of the components of the core complex of photosystem II (PSII). PSII is a light-driven water:plastoquinone oxidoreductase that uses light energy to abstract electrons from H(2)O, generating O(2) and a proton gradient subsequently used for ATP formation. It consists of a core antenna complex that captures photons, and an electron transfer chain that converts photonic excitation into a charge separation. This subunit is found at the monomer-monomer interface and is required for correct PSII assembly and/or dimerization. The chain is Photosystem II reaction center protein L from Prochlorococcus marinus (strain SARG / CCMP1375 / SS120).